The primary structure comprises 398 residues: Tear acid lipase-like protein (398 aa).

The signal sequence occupies residues M1 to C19. The Nucleophile role is filled by S170. A disulfide bridge links C243 with C252. N268 carries an N-linked (GlcNAc...) asparagine glycan. Active-site charge relay system residues include D340 and H369.

Belongs to the AB hydrolase superfamily. Lipase family. Monomer. In terms of processing, N-glycosylated. As to expression, expressed in female lacrimal gland acinar cells from where it is secreted into tears (at protein level).

It is found in the secreted. Functionally, female-specific protein which lacks detectable lipase activity against a range of substrates. Binds the hydrophobic lipid 1-aminoanthracene with high affinity. This chain is Tear acid lipase-like protein, found in Mesocricetus auratus (Golden hamster).